A 457-amino-acid polypeptide reads, in one-letter code: Argininosuccinate lyase (457 aa).

Belongs to the lyase 1 family. Argininosuccinate lyase subfamily.

It localises to the cytoplasm. It catalyses the reaction 2-(N(omega)-L-arginino)succinate = fumarate + L-arginine. The protein operates within amino-acid biosynthesis; L-arginine biosynthesis; L-arginine from L-ornithine and carbamoyl phosphate: step 3/3. The chain is Argininosuccinate lyase from Haemophilus influenzae (strain PittGG).